A 231-amino-acid polypeptide reads, in one-letter code: ATP phosphoribosyltransferase (231 aa).

The protein belongs to the ATP phosphoribosyltransferase family. Short subfamily. As to quaternary structure, heteromultimer composed of HisG and HisZ subunits.

It is found in the cytoplasm. The catalysed reaction is 1-(5-phospho-beta-D-ribosyl)-ATP + diphosphate = 5-phospho-alpha-D-ribose 1-diphosphate + ATP. Its pathway is amino-acid biosynthesis; L-histidine biosynthesis; L-histidine from 5-phospho-alpha-D-ribose 1-diphosphate: step 1/9. Functionally, catalyzes the condensation of ATP and 5-phosphoribose 1-diphosphate to form N'-(5'-phosphoribosyl)-ATP (PR-ATP). Has a crucial role in the pathway because the rate of histidine biosynthesis seems to be controlled primarily by regulation of HisG enzymatic activity. The chain is ATP phosphoribosyltransferase from Brucella anthropi (strain ATCC 49188 / DSM 6882 / CCUG 24695 / JCM 21032 / LMG 3331 / NBRC 15819 / NCTC 12168 / Alc 37) (Ochrobactrum anthropi).